The sequence spans 64 residues: MYLMYTINENGDRVYTLKKRTEDGRPTLSAHPARFSPEDKYSRQRLTIKKRFGLLLTQKPEPIY.

It belongs to the NOP10 family. In terms of assembly, component of the box H/ACA small nucleolar ribonucleoprotein (H/ACA snoRNP) complex consisting of Nop60B, Gar1, NPH2 and Nop10, and associated with H/ACA-type snoRNAs.

It is found in the nucleus. It localises to the nucleolus. In terms of biological role, component of the box H/ACA small nucleolar ribonucleoprotein (H/ACA snoRNP) complex, which catalyzes pseudouridylation of rRNA. This involves the isomerization of uridine such that the ribose is subsequently attached to C5, instead of the normal N1. Pseudouridine ('psi') residues may serve to stabilize the conformation of rRNAs. Required for ribosome biogenesis. H/ACA snoRNP complex-dependent ribosome biogenesis is important in female germline cell differentiation during oogenesis. The chain is H/ACA ribonucleoprotein complex subunit 3 from Drosophila melanogaster (Fruit fly).